Reading from the N-terminus, the 318-residue chain is Taste receptor type 2 member 60 (318 aa).

Residues 1-7 (MNGDHMV) are Extracellular-facing. The helical transmembrane segment at 8-28 (LGSSVTDKKAIILVTILLLLR) threads the bilayer. At 29–40 (LVAIAGNGFIIA) the chain is on the cytoplasmic side. The chain crosses the membrane as a helical span at residues 41-61 (ALGVEWVLRRMLLPCDXLLVS). Over 62 to 88 (LGASRFCLQSVVMGKTIYVFLHPMAFP) the chain is Extracellular. Residues 89-109 (YNPVLQFLAFQWDFLNAATLW) form a helical membrane-spanning segment. At 110–128 (FSTWLSVFYCVKIAAFTHP) the chain is on the cytoplasmic side. The chain crosses the membrane as a helical span at residues 129–149 (VFLWLKHKLSGWLPWILFSSV). Topologically, residues 150 to 183 (GLSSFTTILFFIGNHRMYQNYLRNHLQPWNITGN) are extracellular. A glycan (N-linked (GlcNAc...) asparagine) is linked at Asn179. Residues 184–204 (SIRSYCEKFYLFPLKMITWTM) traverse the membrane as a helical segment. The Cytoplasmic portion of the chain corresponds to 205–234 (PTAVFFICMILLITSLGRHMKKALLTTSGF). Residues 235–255 (REPSMQAHIKALLALLSFAML) form a helical membrane-spanning segment. The Extracellular segment spans residues 256 to 264 (FISYFLSLV). Residues 265-285 (FSAAGIFPPLDFKFWVWESVI) form a helical membrane-spanning segment. Topologically, residues 286–318 (YLCAAVHPIILLFSNCRLRAVLKSCRSSRCGTP) are cytoplasmic.

It belongs to the G-protein coupled receptor T2R family.

It localises to the membrane. In terms of biological role, receptor that may play a role in the perception of bitterness and is gustducin-linked. May play a role in sensing the chemical composition of the gastrointestinal content. The activity of this receptor may stimulate alpha gustducin, mediate PLC-beta-2 activation and lead to the gating of TRPM5. The protein is Taste receptor type 2 member 60 (TAS2R60) of Gorilla gorilla gorilla (Western lowland gorilla).